The following is a 101-amino-acid chain: Conantokin-L (101 aa).

An N-terminal signal peptide occupies residues 1-21 (MQLYTYLYLLVPLVTFHLILG). Positions 22 to 80 (TGTLDHGGALTERRSTDAIALKPEPVLLQKSSARSTDDNGNDRLTQMKRILKKRGNKAR) are excised as a propeptide. 4-carboxyglutamate is present on residues Glu-83, Glu-84, Glu-91, and Glu-95. Residues Glu-91 and Glu-95 each coordinate a divalent metal cation. Asn-99 carries the post-translational modification Asparagine amide.

This sequence belongs to the conotoxin B superfamily. Requires Ca(2+) as cofactor. It depends on Mg(2+) as a cofactor. Expressed by the venom duct.

Its subcellular location is the secreted. Functionally, conantokins inhibit N-methyl-D-aspartate (NMDA) receptors. This toxin is far less potent as an anticonvulsant compound than conantokin-R. It induces sleep-like symptoms in mice. The protein is Conantokin-L of Conus lynceus (Lynceus cone).